We begin with the raw amino-acid sequence, 391 residues long: MTDDFEDSFPDNETDAFEQAPLRLTVDLGALADNWRDMKKRSGRARTAAVVKADAYGLGIEDCGATLYHAGARDFFVATVAEGATLRSYAPEARIFVLSGIWQGQERQVFDNDLVPVLASEEQLSFWMATVAERGDHPCALHVDTGFNRLGLPLDDALFLADDVTRPASFDPVLVLSHLACADTPSSPMNRAQLESFRRVSAAFEGIESSLSASAGIFLGPDYHFDLTRPGIALYGGEAVNDVANPMRPVAKAEARIIQIREAGEGQTVSYGSSFLLKRASRLAIASVGYADGYQRSLSGSGIPLREMGHGGAYGVVNGHKVPVAGRVTMDLTIFDVTDVPANAIRAGDYIELFGPNVPVDETARAAGTIGYEMLTGLGLRYERQYLVADD.

Lys-52 serves as the catalytic Proton acceptor; specific for D-alanine. At Lys-52 the chain carries N6-(pyridoxal phosphate)lysine. A substrate-binding site is contributed by Arg-149. Catalysis depends on Tyr-271, which acts as the Proton acceptor; specific for L-alanine. Met-330 is a substrate binding site.

This sequence belongs to the alanine racemase family. The cofactor is pyridoxal 5'-phosphate.

The enzyme catalyses L-alanine = D-alanine. It participates in amino-acid biosynthesis; D-alanine biosynthesis; D-alanine from L-alanine: step 1/1. Its pathway is cell wall biogenesis; peptidoglycan biosynthesis. Its function is as follows. Catalyzes the interconversion of L-alanine and D-alanine. Provides the D-alanine required for cell wall biosynthesis. This chain is Alanine racemase, biosynthetic (alr), found in Agrobacterium fabrum (strain C58 / ATCC 33970) (Agrobacterium tumefaciens (strain C58)).